Consider the following 255-residue polypeptide: Protein 2b (255 aa).

Belongs to the tobravirus protein 2b family.

Its subcellular location is the virion. Functionally, may function by interacting with a small, flexible domain located at the C-terminus of the CP, forming a bridge between the virus particle and the internal surface of the vector nematode feeding apparatus. In Tobacco rattle virus (strain TCM), this protein is Protein 2b.